The following is a 154-amino-acid chain: uncharacterized protein (154 aa).

2 coiled-coil regions span residues 8-48 (DEEV…AIEA) and 89-138 (VQEL…RGLV).

This is an uncharacterized protein from Treponema pallidum (strain Nichols).